A 288-amino-acid polypeptide reads, in one-letter code: Carbon monoxide dehydrogenase medium chain (288 aa).

Residues 1-177 (MIPGSFDYHR…TAIRIPVPPT (177 aa)) form the FAD-binding PCMH-type domain. Residues 32 to 36 (AGGHS) and 111 to 115 (TIGGN) each bind FAD.

In terms of assembly, dimer of heterotrimers. Each heterotrimer consists of a large, a medium and a small subunit. It depends on FAD as a cofactor.

The catalysed reaction is CO + a quinone + H2O = a quinol + CO2. Functionally, catalyzes the oxidation of carbon monoxide to carbon dioxide. The polypeptide is Carbon monoxide dehydrogenase medium chain (coxM) (Afipia carboxidovorans (strain ATCC 49405 / DSM 1227 / KCTC 32145 / OM5) (Oligotropha carboxidovorans)).